The following is a 90-amino-acid chain: Acylphosphatase (90 aa).

One can recognise an Acylphosphatase-like domain in the interval 5–90 (CEKFVVSGIV…CREYQGFEIL (86 aa)). Catalysis depends on residues Arg-20 and Asn-38.

It belongs to the acylphosphatase family.

The enzyme catalyses an acyl phosphate + H2O = a carboxylate + phosphate + H(+). In Vibrio vulnificus (strain CMCP6), this protein is Acylphosphatase (acyP).